Here is a 402-residue protein sequence, read N- to C-terminus: Protein HAIKU1 (402 aa).

Disordered regions lie at residues methionine 1–glutamine 44, threonine 63–methionine 135, serine 160–serine 266, and glutamine 346–tyrosine 402. The span at leucine 24 to glutamine 44 shows a compositional bias: polar residues. Residues phenylalanine 55–glycine 64 carry the VQ motif. Over residues glutamine 76 to leucine 87 the composition is skewed to polar residues. A compositionally biased stretch (pro residues) spans valine 103–serine 113. Polar residues predominate over residues serine 160–glutamine 173. Residues methionine 218–proline 240 are compositionally biased toward low complexity. Pro residues predominate over residues tyrosine 257–serine 266. Over residues threonine 349–alanine 358 the composition is skewed to polar residues. The span at glutamine 371–proline 380 shows a compositional bias: pro residues. A compositionally biased stretch (low complexity) spans glycine 381 to glycine 390.

As to quaternary structure, interacts with WRKY10. Interacts with MPK6.

It is found in the nucleus. Modulates seed size by negatively regulating the cellularization of syncytial endosperm. May function by binding and modulating the activity of WRKY10 transcription factor. This Arabidopsis thaliana (Mouse-ear cress) protein is Protein HAIKU1.